Reading from the N-terminus, the 460-residue chain is Lipase member I (460 aa).

Residues 1–15 (MRVYIFLCLMCWVRS) form the signal peptide. N63 is a glycosylation site (N-linked (GlcNAc...) asparagine). The active-site Nucleophile is the S159. D183 acts as the Charge relay system in catalysis. A disulfide bond links C238 and C251. Catalysis depends on H253, which acts as the Charge relay system. Disulfide bonds link C275–C286 and C289–C297. Residue N396 is glycosylated (N-linked (GlcNAc...) asparagine). Residues C436 and C455 are joined by a disulfide bond.

Belongs to the AB hydrolase superfamily. Lipase family. As to quaternary structure, interacts with heparin with a high affinity. Expressed in testis. Expressed exclusively at the connecting piece of the sperm.

Its subcellular location is the cell membrane. It is found in the secreted. The catalysed reaction is 1-hexadecanoyl-2-(9Z-octadecenoyl)-sn-glycero-3-phosphate + H2O = 2-(9Z-octadecenoyl)-sn-glycero-3-phosphate + hexadecanoate + H(+). Inhibited by sodium vanadate. Hydrolyzes specifically phosphatidic acid (PA) to produce 2-acyl lysophosphatidic acid (LPA; a potent bioactive lipid mediator) and fatty acid. Does not hydrolyze other phospholipids, like phosphatidylserine (PS), phosphatidylcholine (PC) and phosphatidylethanolamine (PE) or triacylglycerol (TG). This Homo sapiens (Human) protein is Lipase member I (LIPI).